A 258-amino-acid chain; its full sequence is Peptidase inhibitor 15 (258 aa).

An N-terminal signal peptide occupies residues 1–21 (MIMNSAVSLVILLSLLCEAHT). Residues 22–60 (VVLLNPTDSSLPANNFTDTEAALSTPLESADIPKARRKR) constitute a propeptide that is removed on maturation. N-linked (GlcNAc...) asparagine glycans are attached at residues Asn36 and Asn124. Residues 71–211 (LDYHNQVRGK…RRAVYLVCNY (141 aa)) form the SCP domain.

This sequence belongs to the CRISP family. Post-translationally, N-glycosylated. Weakly expressed. Expressed at low level in prostate, mammary gland, salivary gland and thyroid gland.

It localises to the secreted. In terms of biological role, serine protease inhibitor which displays weak inhibitory activity against trypsin. May play a role in facial patterning during embryonic development. This is Peptidase inhibitor 15 (Pi15) from Mus musculus (Mouse).